We begin with the raw amino-acid sequence, 494 residues long: Amidophosphoribosyltransferase (494 aa).

A propeptide spanning residues 1 to 10 is cleaved from the precursor; the sequence is MFNYSGLNEE. Cys11 serves as the catalytic Nucleophile. Residues 11 to 231 form the Glutamine amidotransferase type-2 domain; the sequence is CGVFGIWNHP…AGEYVVINDK (221 aa). Mg(2+) contacts are provided by Ser294, Asp356, and Asp357.

This sequence in the C-terminal section; belongs to the purine/pyrimidine phosphoribosyltransferase family. Requires Mg(2+) as cofactor.

The enzyme catalyses 5-phospho-beta-D-ribosylamine + L-glutamate + diphosphate = 5-phospho-alpha-D-ribose 1-diphosphate + L-glutamine + H2O. It functions in the pathway purine metabolism; IMP biosynthesis via de novo pathway; N(1)-(5-phospho-D-ribosyl)glycinamide from 5-phospho-alpha-D-ribose 1-diphosphate: step 1/2. In terms of biological role, catalyzes the formation of phosphoribosylamine from phosphoribosylpyrophosphate (PRPP) and glutamine. The protein is Amidophosphoribosyltransferase of Staphylococcus aureus (strain COL).